Here is a 291-residue protein sequence, read N- to C-terminus: 5'-3' exonuclease (291 aa).

Residues 176–269 enclose the 5'-3' exonuclease domain; it reads APYQVVEYKG…DLTGLKPIQK (94 aa).

Its function is as follows. 5'-3' exonuclease acting preferentially on double-stranded DNA. The sequence is that of 5'-3' exonuclease (polA) from Mycoplasma genitalium (strain ATCC 33530 / DSM 19775 / NCTC 10195 / G37) (Mycoplasmoides genitalium).